A 118-amino-acid chain; its full sequence is Small ribosomal subunit protein uS13 (118 aa).

Residues 94–118 (SLPLRGQRTKTNARTRKGPRKPIRK) are disordered.

Belongs to the universal ribosomal protein uS13 family. In terms of assembly, part of the 30S ribosomal subunit. Forms a loose heterodimer with protein S19. Forms two bridges to the 50S subunit in the 70S ribosome.

In terms of biological role, located at the top of the head of the 30S subunit, it contacts several helices of the 16S rRNA. In the 70S ribosome it contacts the 23S rRNA (bridge B1a) and protein L5 of the 50S subunit (bridge B1b), connecting the 2 subunits; these bridges are implicated in subunit movement. Contacts the tRNAs in the A and P-sites. This Shewanella violacea (strain JCM 10179 / CIP 106290 / LMG 19151 / DSS12) protein is Small ribosomal subunit protein uS13.